A 295-amino-acid chain; its full sequence is Protease HtpX (295 aa).

2 consecutive transmembrane segments (helical) span residues 4 to 24 (ILLFVATNLAVVLVASITLSL) and 41 to 61 (SSLLVFCAVFGFAGSLVSLFI). Residue H147 coordinates Zn(2+). E148 is an active-site residue. H151 provides a ligand contact to Zn(2+). A run of 2 helical transmembrane segments spans residues 158 to 178 (VTLALVQGVVNTFVMFFARII) and 199 to 219 (VATIVAELILGILASMIVMWF). E224 is a binding site for Zn(2+).

The protein belongs to the peptidase M48B family. Zn(2+) is required as a cofactor.

Its subcellular location is the cell inner membrane. The polypeptide is Protease HtpX (Pseudomonas putida (strain GB-1)).